The sequence spans 75 residues: Kappa-thalatoxin-Cad2a (75 aa).

An N-terminal signal peptide occupies residues 1-22; sequence MKFQMIAAVLLIAFCLCVVVTA. Positions 23–40 are excised as a propeptide; that stretch reads RMELQDVEDMKNGSFQKR. In terms of domain architecture, ShKT spans 43–75; that stretch reads CIDTIPKSRCTAFQCKNSMKYRLSFCRKTCGTC. 3 disulfides stabilise this stretch: cysteine 43-cysteine 75, cysteine 52-cysteine 68, and cysteine 57-cysteine 72.

This sequence belongs to the sea anemone type 1 potassium channel toxin family. Type 1a subfamily.

Its subcellular location is the secreted. It is found in the nematocyst. Functionally, inhibits voltage-gated potassium channels (Kv) with higher potency for Kv1.1/KCNA1 and Kv1.3/KCNA3. This chain is Kappa-thalatoxin-Cad2a, found in Cryptodendrum adhaesivum (Adhesive sea anemone).